The chain runs to 419 residues: L-rhamnose isomerase (419 aa).

Mn(2+)-binding residues include histidine 262, aspartate 294, and aspartate 296.

This sequence belongs to the rhamnose isomerase family. As to quaternary structure, homotetramer. The cofactor is Mn(2+).

The protein localises to the cytoplasm. It carries out the reaction L-rhamnopyranose = L-rhamnulose. It participates in carbohydrate degradation; L-rhamnose degradation; glycerone phosphate from L-rhamnose: step 1/3. Functionally, catalyzes the interconversion of L-rhamnose and L-rhamnulose. The sequence is that of L-rhamnose isomerase from Escherichia coli O157:H7.